Reading from the N-terminus, the 445-residue chain is Tubulin beta-4 chain (445 aa).

The MREI motif signature appears at Met-1 to Ile-4. GTP-binding residues include Gln-11, Glu-69, Ser-138, Gly-142, Thr-143, Gly-144, Asn-204, and Asn-226. Glu-69 serves as a coordination point for Mg(2+). Positions Tyr-425 to Ala-445 are disordered. A compositionally biased stretch (acidic residues) spans Thr-429–Ala-445. 5-glutamyl polyglutamate is present on Glu-438.

The protein belongs to the tubulin family. In terms of assembly, dimer of alpha and beta chains. A typical microtubule is a hollow water-filled tube with an outer diameter of 25 nm and an inner diameter of 15 nM. Alpha-beta heterodimers associate head-to-tail to form protofilaments running lengthwise along the microtubule wall with the beta-tubulin subunit facing the microtubule plus end conferring a structural polarity. Microtubules usually have 13 protofilaments but different protofilament numbers can be found in some organisms and specialized cells. Requires Mg(2+) as cofactor. Post-translationally, some glutamate residues at the C-terminus are polyglycylated, resulting in polyglycine chains on the gamma-carboxyl group. Glycylation is mainly limited to tubulin incorporated into axonemes (cilia and flagella) whereas glutamylation is prevalent in neuronal cells, centrioles, axonemes, and the mitotic spindle. Both modifications can coexist on the same protein on adjacent residues, and lowering polyglycylation levels increases polyglutamylation, and reciprocally. The precise function of polyglycylation is still unclear. Some glutamate residues at the C-terminus are polyglutamylated, resulting in polyglutamate chains on the gamma-carboxyl group. Polyglutamylation plays a key role in microtubule severing by spastin (SPAST). SPAST preferentially recognizes and acts on microtubules decorated with short polyglutamate tails: severing activity by SPAST increases as the number of glutamates per tubulin rises from one to eight, but decreases beyond this glutamylation threshold. As to expression, preferential expression in germ cells.

It localises to the cytoplasm. The protein resides in the cytoskeleton. Its function is as follows. Tubulin is the major constituent of microtubules, a cylinder consisting of laterally associated linear protofilaments composed of alpha- and beta-tubulin heterodimers. Microtubules grow by the addition of GTP-tubulin dimers to the microtubule end, where a stabilizing cap forms. Below the cap, tubulin dimers are in GDP-bound state, owing to GTPase activity of alpha-tubulin. This Xenopus laevis (African clawed frog) protein is Tubulin beta-4 chain (tubb4).